We begin with the raw amino-acid sequence, 80 residues long: Small ribosomal subunit protein bS18 (80 aa).

Belongs to the bacterial ribosomal protein bS18 family. Part of the 30S ribosomal subunit. Forms a tight heterodimer with protein bS6.

Functionally, binds as a heterodimer with protein bS6 to the central domain of the 16S rRNA, where it helps stabilize the platform of the 30S subunit. In Methylocella silvestris (strain DSM 15510 / CIP 108128 / LMG 27833 / NCIMB 13906 / BL2), this protein is Small ribosomal subunit protein bS18.